The following is a 259-amino-acid chain: Protein unc-50 homolog (259 aa).

An N-acetylmethionine modification is found at Met1. The Cytoplasmic portion of the chain corresponds to 1–82 (MLPSTSVNSL…TKDQWARDDP (82 aa)). Residue Ser6 is modified to Phosphoserine. The helical transmembrane segment at 83-103 (AFLVLLSIWLCVSTIGFGFVL) threads the bilayer. The Lumenal segment spans residues 104–115 (DMGFFETIKLLL). Residues 116 to 136 (WVVLIDCVGVGLLIATLMWFI) form a helical membrane-spanning segment. At 137 to 163 (SNKYLVKRQSRDYDVEWGYAFDVHLNA) the chain is on the cytoplasmic side. Residues 164–184 (FYPLLVILHFIQLFFINHVIL) traverse the membrane as a helical segment. Residues 185-187 (TDT) lie on the Lumenal side of the membrane. Residues 188-208 (FIGYLVGNTLWLVAVGYYIYV) traverse the membrane as a helical segment. At 209–222 (TFLGYSALPFLKNT) the chain is on the cytoplasmic side. A helical transmembrane segment spans residues 223-243 (VILLYPFAPLILLYGLSLALG). Residues 244–259 (WNFTHTLCSFYKYRVK) are Lumenal-facing.

This sequence belongs to the unc-50 family. In terms of tissue distribution, present in periodontal ligament fibroblasts (at protein level).

It is found in the nucleus inner membrane. The protein localises to the golgi apparatus membrane. In terms of biological role, involved in the cell surface expression of neuronal nicotinic receptors. Binds RNA. This chain is Protein unc-50 homolog (UNC50), found in Homo sapiens (Human).